A 252-amino-acid chain; its full sequence is tRNA1(Val) (adenine(37)-N6)-methyltransferase (252 aa).

The protein belongs to the methyltransferase superfamily. tRNA (adenine-N(6)-)-methyltransferase family.

Its subcellular location is the cytoplasm. The enzyme catalyses adenosine(37) in tRNA1(Val) + S-adenosyl-L-methionine = N(6)-methyladenosine(37) in tRNA1(Val) + S-adenosyl-L-homocysteine + H(+). In terms of biological role, specifically methylates the adenine in position 37 of tRNA(1)(Val) (anticodon cmo5UAC). The sequence is that of tRNA1(Val) (adenine(37)-N6)-methyltransferase from Yersinia pseudotuberculosis serotype IB (strain PB1/+).